Here is a 318-residue protein sequence, read N- to C-terminus: Pyrimidine-specific ribonucleoside hydrolase RihA (318 aa).

H240 is an active-site residue.

It belongs to the IUNH family. RihA subfamily.

Its function is as follows. Hydrolyzes cytidine or uridine to ribose and cytosine or uracil, respectively. The protein is Pyrimidine-specific ribonucleoside hydrolase RihA of Shewanella baltica (strain OS155 / ATCC BAA-1091).